The following is a 382-amino-acid chain: D-galactonate dehydratase (382 aa).

Asp183 contacts Mg(2+). The active-site Proton donor is the His185. Mg(2+) contacts are provided by Glu209 and Glu235. His285 acts as the Proton acceptor in catalysis.

This sequence belongs to the mandelate racemase/muconate lactonizing enzyme family. GalD subfamily. It depends on Mg(2+) as a cofactor.

It catalyses the reaction D-galactonate = 2-dehydro-3-deoxy-D-galactonate + H2O. It functions in the pathway carbohydrate acid metabolism; D-galactonate degradation; D-glyceraldehyde 3-phosphate and pyruvate from D-galactonate: step 1/3. In terms of biological role, catalyzes the dehydration of D-galactonate to 2-keto-3-deoxy-D-galactonate. The sequence is that of D-galactonate dehydratase from Pectobacterium atrosepticum (strain SCRI 1043 / ATCC BAA-672) (Erwinia carotovora subsp. atroseptica).